The primary structure comprises 185 residues: Recombination protein RecR (185 aa).

The C4-type zinc finger occupies Cys-44–Cys-59. In terms of domain architecture, Toprim spans Asn-67–Pro-161.

The protein belongs to the RecR family.

Its function is as follows. May play a role in DNA repair. It seems to be involved in an RecBC-independent recombinational process of DNA repair. It may act with RecF and RecO. This chain is Recombination protein RecR, found in Trichormus variabilis (strain ATCC 29413 / PCC 7937) (Anabaena variabilis).